The sequence spans 1282 residues: Crescerin-like protein che-12 (1282 aa).

TOG stretches follow at residues 33–240 (DFDT…EHTE) and 268–515 (PSLV…MDSF). HEAT repeat units lie at residues 59 to 96 (QKKG…TFGS), 100 to 137 (YCMC…LKPE), 162 to 209 (ELHH…FIGN), 261 to 300 (RLRF…QITP), 308 to 345 (PHLH…HLKG), 349 to 386 (AHIQ…NINP), 388 to 421 (TVGG…TISP), and 424 to 461 (FNLQ…LLNG). A disordered region spans residues 566 to 714 (IQQQGQAEKP…RSFDDRPAKA (149 aa)). Composition is skewed to low complexity over residues 575 to 592 (PSFS…HQAQ) and 633 to 644 (SAASNPNSSTSS). Over residues 702 to 712 (DPPRSFDDRPA) the composition is skewed to basic and acidic residues. TOG stretches follow at residues 800-1022 (NMSV…ANVE) and 1066-1282 (TELL…ALIR). 7 HEAT repeats span residues 838–875 (DNLK…NLNS), 879–917 (SEME…AATA), 919–953 (KALQ…IQGS), 961–998 (NALS…DPNF), 1095–1132 (ASDT…SMAK), 1177–1214 (IEPV…LAYK), and 1219–1258 (QVEV…LIGE).

This sequence belongs to the Crescerin family. Detected in a subset of amphid neurons that lack wing- or finger-like ciliary extensions. Likewise, detected in phasmid neurons.

It localises to the cell projection. The protein resides in the cilium. It is found in the perikaryon. The protein localises to the dendrite. Required for normal structure and function of sensory cilia on amphid neurons, especially for the formation of distal ciliary structures, but is less important for normal assembly of middle and basal ciliary structures. Plays a role in the organization of axoneme microtubule bundles in sensory cilia. Required for normal structure and function of the ASER neuron that mediates attraction to NaCl. Required for normal chemotaxis to NaCl. Required for normal avoidance response to high osmolarity. In contrast, is not required for normal chemotaxis to isoamyl alcohol. Does not play a role in intraflagella transport (IFT). Promotes dauer formation in response to pheromones such as the ascarosides ascr#2, ascr#3, ascr#5, ascr#8 and icas#9. This Caenorhabditis elegans protein is Crescerin-like protein che-12.